A 307-amino-acid chain; its full sequence is Recombination-associated protein RdgC (307 aa).

This sequence belongs to the RdgC family.

Its subcellular location is the cytoplasm. It localises to the nucleoid. Its function is as follows. May be involved in recombination. The protein is Recombination-associated protein RdgC of Burkholderia orbicola (strain MC0-3).